We begin with the raw amino-acid sequence, 220 residues long: Ribose-5-phosphate isomerase A (220 aa).

Residues 29–32, 82–85, and 95–98 contribute to the substrate site; these read TGST, DGCD, and KGGG. Glu104 (proton acceptor) is an active-site residue. Lys122 serves as a coordination point for substrate.

The protein belongs to the ribose 5-phosphate isomerase family. In terms of assembly, homodimer.

The enzyme catalyses aldehydo-D-ribose 5-phosphate = D-ribulose 5-phosphate. Its pathway is carbohydrate degradation; pentose phosphate pathway; D-ribose 5-phosphate from D-ribulose 5-phosphate (non-oxidative stage): step 1/1. In terms of biological role, catalyzes the reversible conversion of ribose-5-phosphate to ribulose 5-phosphate. This Laribacter hongkongensis (strain HLHK9) protein is Ribose-5-phosphate isomerase A.